The following is a 326-amino-acid chain: GTPase IMAP family member 5 (326 aa).

The Cytoplasmic portion of the chain corresponds to 1–297; that stretch reads MEDHGFEELS…MLCRVTSCLD (297 aa). Positions 42-245 constitute an AIG1-type G domain; it reads SGLLRILLVG…HSNDLFVYTQ (204 aa). Residues 51–59, serine 72, 169–171, and asparagine 206 contribute to the GTP site; these read GKSGCGKSA and HKE. Residues 298-318 form a helical; Anchor for type IV membrane protein membrane-spanning segment; it reads WHIAVSVLLIVLGLTLLITLI. Over 319 to 326 the chain is Lumenal; the sequence is NMYIGRWK.

Belongs to the TRAFAC class TrmE-Era-EngA-EngB-Septin-like GTPase superfamily. AIG1/Toc34/Toc159-like paraseptin GTPase family. IAN subfamily. Interacts with BAD, BAK1, BAX, BCL2, BCL2L1/Bcl-xL and BCL2L11/BimEL. The interaction with BAX is increased, when cells initiate apoptosis upon IL2 withdrawal. Forms a complex with BCL2L1 or MCL1 and HSPA8/HSC70; the interaction between HSPA8 and BCL2L1 or MCL1 is impaired in the absence of GIMAP5. May interact (via N-terminus) with microtubules. Primarily expressed in spleen, heart, lung and intestine and, at lower levels, in kidney, stomach and muscle. Expressed in thymus and lymph nodes (at protein level). In the spleen, expressed in periarteriolar lymphatic sheets. Isoform 2: Expressed at higher levels in T lymphocytes compared to isoform 1.

It is found in the lysosome membrane. The protein localises to the endosome. It localises to the multivesicular body membrane. The protein resides in the endosome membrane. In terms of biological role, required for mitochondrial integrity and T-cell survival. May contribute to T-cell quiescence. Plays a role in T lymphocyte development and the optimal generation of CD4/CD8 double-positive thymocytes. Inhibitor of GSK3A, possibly by sequestering GSK3A in cytoplasmic vesicles and impairing its translocation to the nucleus. Consequently, impairs GSK3A-dependent transcriptional program and regulation of the DNA damage response occurring during T cells proliferation. Required for the survival of peripheral T cells, natural killer (NK) and NK T-cell development and the maintenance of normal liver function. Promotes the survival of quiescent T-cells. May regulate Ca(2+) homeostasis by modulating lysosomal Ca(2+) stores, preventing its accumulation in the absence of T cell activation. May play a role in mitochondrial DNA segregation in hematopoietic tissues. Is a regulator of liver endothelial cell homeostasis. The sequence is that of GTPase IMAP family member 5 (Gimap5) from Rattus norvegicus (Rat).